Here is a 203-residue protein sequence, read N- to C-terminus: ATP-dependent Clp protease proteolytic subunit (203 aa).

Ser-100 (nucleophile) is an active-site residue. The active site involves His-125.

The protein belongs to the peptidase S14 family. In terms of assembly, component of the chloroplastic Clp protease core complex.

It localises to the plastid. It is found in the chloroplast stroma. It carries out the reaction Hydrolysis of proteins to small peptides in the presence of ATP and magnesium. alpha-casein is the usual test substrate. In the absence of ATP, only oligopeptides shorter than five residues are hydrolyzed (such as succinyl-Leu-Tyr-|-NHMec, and Leu-Tyr-Leu-|-Tyr-Trp, in which cleavage of the -Tyr-|-Leu- and -Tyr-|-Trp bonds also occurs).. Its function is as follows. Cleaves peptides in various proteins in a process that requires ATP hydrolysis. Has a chymotrypsin-like activity. Plays a major role in the degradation of misfolded proteins. The sequence is that of ATP-dependent Clp protease proteolytic subunit from Dioscorea elephantipes (Elephant's foot yam).